The chain runs to 485 residues: Amino acid permease 1 (485 aa).

The segment covering 1–15 (MKSFNTEGHNHSTAE) has biased composition (polar residues). The disordered stretch occupies residues 1-35 (MKSFNTEGHNHSTAESGDAYTVSDPTKNVDEDGRE). At 1–40 (MKSFNTEGHNHSTAESGDAYTVSDPTKNVDEDGREKRTGT) the chain is on the cytoplasmic side. Transmembrane regions (helical) follow at residues 41–61 (WLTASAHIITAVIGSGVLSLA) and 62–82 (WAIAQLGWIAGTSILLIFSFI). The Cytoplasmic segment spans residues 83 to 129 (TYFTSTMLADCYRAPDPVTGKRNYTYMDVVRSYLGGRKVQLCGVAQY). The chain crosses the membrane as a helical span at residues 130 to 150 (GNLIGVTVGYTITASISLVAV). Residues 151–166 (GKSNCFHDKGHTADCT) lie on the Extracellular side of the membrane. Residues 167–187 (ISNYPYMAVFGIIQVILSQIP) traverse the membrane as a helical segment. Over 188–194 (NFHKLSF) the chain is Cytoplasmic. A helical transmembrane segment spans residues 195 to 215 (LSIMAAVMSFTYATIGIGLAI). At 216-245 (ATVAGGKVGKTSMTGTAVGVDVTAAQKIWR) the chain is on the extracellular side. Residues 246–266 (SFQAVGDIAFAYAYATVLIEI) traverse the membrane as a helical segment. Residues 267-285 (QDTLRSSPAENKAMKRASL) are Cytoplasmic-facing. A helical transmembrane segment spans residues 286–306 (VGVSTTTFFYILCGCIGYAAF). The Extracellular portion of the chain corresponds to 307-318 (GNNAPGDFLTDF). The chain crosses the membrane as a helical span at residues 319–339 (GFFEPFWLIDFANACIAVHLI). At 340–394 (GAYQVFAQPIFQFVEKKCNRNYPDNKFITSEYSVNVPFLGKFNISLFRLVWRTAY) the chain is on the cytoplasmic side. 2 helical membrane passes run 395–415 (VVITTVVAMIFPFFNAILGLI) and 416–436 (GAASFWPLTVYFPVEMHIAQT). Residues 437–450 (KIKKYSARWIALKT) are Cytoplasmic-facing. A helical membrane pass occupies residues 451-471 (MCYVCLIVSLLAAAGSIAGLI). At 472–485 (SSVKTYKPFRTMHE) the chain is on the extracellular side.

The protein belongs to the amino acid/polyamine transporter 2 family. Amino acid/auxin permease (AAAP) (TC 2.A.18.2) subfamily. As to expression, highly expressed in developing pods. Found in the endosperm and in the storage parenchyma and the outer epidermis cells of the developing embryo. Lower levels of expression in flowers, in the vascular system of the cotyledon and in the root epidermal cells, including root hairs and throughout the root tip.

The protein localises to the cell membrane. With respect to regulation, inhibited by carbonylcyanide m-chlorophenylhydrazone and diethylpyrocarbonate (DEPC). Its function is as follows. Amino acid-proton symporter. Stereospecific transporter with a broad specificity for histidine, glutamate and neutral amino acids. Reduced affinities for asparagine and valine. Involved in amino acid uptake from the apoplastic cavity into the embryo cells for storage protein accumulation and in root amino acid uptake. In Arabidopsis thaliana (Mouse-ear cress), this protein is Amino acid permease 1 (AAP1).